The chain runs to 156 residues: Cyanate hydratase (156 aa).

Active-site residues include arginine 96, glutamate 99, and serine 122.

It belongs to the cyanase family.

The enzyme catalyses cyanate + hydrogencarbonate + 3 H(+) = NH4(+) + 2 CO2. Functionally, catalyzes the reaction of cyanate with bicarbonate to produce ammonia and carbon dioxide. The sequence is that of Cyanate hydratase from Pseudomonas aeruginosa (strain LESB58).